Here is a 231-residue protein sequence, read N- to C-terminus: 2,3-bisphosphoglycerate-dependent phosphoglycerate mutase (231 aa).

Substrate-binding positions include 8-15 (RHGESEWN), 21-22 (TG), Arg-60, 87-90 (ERHY), Lys-98, 114-115 (RR), and 183-184 (GN). His-9 (tele-phosphohistidine intermediate) is an active-site residue. Residue Glu-87 is the Proton donor/acceptor of the active site.

The protein belongs to the phosphoglycerate mutase family. BPG-dependent PGAM subfamily.

The enzyme catalyses (2R)-2-phosphoglycerate = (2R)-3-phosphoglycerate. Its pathway is carbohydrate degradation; glycolysis; pyruvate from D-glyceraldehyde 3-phosphate: step 3/5. Its function is as follows. Catalyzes the interconversion of 2-phosphoglycerate and 3-phosphoglycerate. This is 2,3-bisphosphoglycerate-dependent phosphoglycerate mutase from Streptococcus pyogenes serotype M49 (strain NZ131).